We begin with the raw amino-acid sequence, 860 residues long: Leucine--tRNA ligase (860 aa).

Positions 42-52 match the 'HIGH' region motif; it reads PYPSGRLHMGH. Positions 619-623 match the 'KMSKS' region motif; the sequence is KMSKS. Residue Lys-622 coordinates ATP.

Belongs to the class-I aminoacyl-tRNA synthetase family.

Its subcellular location is the cytoplasm. The enzyme catalyses tRNA(Leu) + L-leucine + ATP = L-leucyl-tRNA(Leu) + AMP + diphosphate. In Photorhabdus laumondii subsp. laumondii (strain DSM 15139 / CIP 105565 / TT01) (Photorhabdus luminescens subsp. laumondii), this protein is Leucine--tRNA ligase.